Reading from the N-terminus, the 466-residue chain is Ribulose bisphosphate carboxylase large chain (466 aa).

Residue Lys5 is modified to N6,N6,N6-trimethyllysine. Residues Asn114 and Thr164 each coordinate substrate. The Proton acceptor role is filled by Lys166. Lys168 contributes to the substrate binding site. Lys192, Asp194, and Glu195 together coordinate Mg(2+). Lys192 is modified (N6-carboxylysine). His285 acts as the Proton acceptor in catalysis. The substrate site is built by Arg286, His318, and Ser370.

It belongs to the RuBisCO large chain family. Type I subfamily. In terms of assembly, heterohexadecamer of 8 large chains and 8 small chains; disulfide-linked. The disulfide link is formed within the large subunit homodimers. It depends on Mg(2+) as a cofactor. In terms of processing, the disulfide bond which can form in the large chain dimeric partners within the hexadecamer appears to be associated with oxidative stress and protein turnover.

It is found in the plastid. It localises to the chloroplast. It catalyses the reaction 2 (2R)-3-phosphoglycerate + 2 H(+) = D-ribulose 1,5-bisphosphate + CO2 + H2O. The enzyme catalyses D-ribulose 1,5-bisphosphate + O2 = 2-phosphoglycolate + (2R)-3-phosphoglycerate + 2 H(+). In terms of biological role, ruBisCO catalyzes two reactions: the carboxylation of D-ribulose 1,5-bisphosphate, the primary event in carbon dioxide fixation, as well as the oxidative fragmentation of the pentose substrate in the photorespiration process. Both reactions occur simultaneously and in competition at the same active site. This is Ribulose bisphosphate carboxylase large chain from Cucurbita pepo (Vegetable marrow).